Reading from the N-terminus, the 939-residue chain is Trafficking kinesin-binding protein 1 (939 aa).

An HAP1 N-terminal domain is found at 46–353; sequence LEEQLPHYKL…EELKNLRNKT (308 aa). A coiled-coil region spans residues 106-354; the sequence is KTYNDIDAVT…ELKNLRNKTM (249 aa). Positions 359–509 are interaction with HGS; sequence RYHSLGLFPM…SLRRENYLSE (151 aa). Ser444 carries O-linked (GlcNAc) serine glycosylation. The interval 472-492 is disordered; the sequence is LGNEDHNKKPGTPGTPGSHDL. Positions 490–524 form a coiled coil; that stretch reads HDLETALRRLSLRRENYLSERRFFEEEQERKLREL. Ser534 carries the phosphoserine modification. An interaction with OGT region spans residues 655-669; sequence PGKCMSQTNSTFTFT. O-linked (GlcNAc) serine glycosylation is found at Ser677 and Ser716. 2 positions are modified to phosphoserine: Ser716 and Ser905.

The protein belongs to the milton family. As to quaternary structure, interacts with RHOT1 and RHOT2. Found in a complex with KIF5B, OGT, RHOT1 and RHOT2. Interacts with HGS. Interacts with GABRA1. Interacts with KIF5C. Interacts with OGT; stable interaction is not required for glycosylation of this protein by OGT. Isoform 1 interacts with OGT. O-glycosylated. Glycosylated by OGT; glycosylation in response to increased extracellular glucose levels is required for and leads to regulation of mitochondrial motility by OGT. As to expression, widely expressed with the greatest expression in brain, liver and kidney. Detected throughout the CNS, including the cortex, hippocamps, thalamus and various subcortical nuclei of the forebrain and midbrain, the granule of Purkinje layers of the cerebellum and the gray matter of the spinal cord. High level detected in lower moter neurons (at protein level).

The protein resides in the cytoplasm. The protein localises to the nucleus. It is found in the mitochondrion. It localises to the early endosome. Its subcellular location is the endosome. The protein resides in the mitochondrion membrane. The protein localises to the cell cortex. Involved in the regulation of endosome-to-lysosome trafficking, including endocytic trafficking of EGF-EGFR complexes and GABA-A receptors. Involved in mitochondrial motility. When O-glycosylated, abolishes mitochondrial motility. Crucial for recruiting OGT to the mitochondrial surface of neuronal processes. TRAK1 and RHOT form an essential protein complex that links KIF5 to mitochondria for light chain-independent, anterograde transport of mitochondria. The protein is Trafficking kinesin-binding protein 1 (Trak1) of Mus musculus (Mouse).